We begin with the raw amino-acid sequence, 300 residues long: Geranyl diphosphate 2-C-methyltransferase (300 aa).

The interval Met1 to Ala24 is disordered.

The protein belongs to the geranyl diphosphate 2-C-methyltransferase family. Requires Mg(2+) as cofactor.

The catalysed reaction is (2E)-geranyl diphosphate + S-adenosyl-L-methionine = (E)-2-methylgeranyl diphosphate + S-adenosyl-L-homocysteine + H(+). In terms of biological role, catalyzes the SAM-dependent methylation of geranyl diphosphate (GPP) to yield (E)-2-methylgeranyl diphosphate (2-MeGPP). This chain is Geranyl diphosphate 2-C-methyltransferase (gdpmt), found in Streptomyces lasalocidi (Streptomyces lasaliensis).